A 1004-amino-acid polypeptide reads, in one-letter code: Outer cell wall protein (1004 aa).

An N-terminal signal peptide occupies residues 1–24 (MNKKVVLSVLSTTLVASVAASAFA).

In terms of assembly, the outer cell wall layer is composed of subunits of the outer cell wall protein. These proteins form a hexagonal array with a lattice constant of 14.5 nm in the outer cell wall layers.

The protein resides in the secreted. The protein localises to the cell wall. It is found in the S-layer. In terms of biological role, the outer wall protein binds to the middle cell wall protein. This is Outer cell wall protein from Brevibacillus brevis (strain 47 / JCM 6285 / NBRC 100599).